We begin with the raw amino-acid sequence, 491 residues long: Fibrinogen beta chain (491 aa).

Residues 1–30 (MKRMVSWSFHKLKTMKHLLLLLLCVFLVKS) form the signal peptide. The residue at position 31 (glutamine 31) is a Pyrrolidone carboxylic acid. The interval 44–75 (RGHRPLDKKREEAPSLRPAPPPISGGGYRARP) is disordered. A beta-chain polymerization, binding distal domain of another fibrin region spans residues 45–47 (GHR). Residues 47 to 57 (RPLDKKREEAP) are compositionally biased toward basic and acidic residues. Residues 157–222 (KRQKQVKDNE…ESDVSAQMEY (66 aa)) adopt a coiled-coil conformation. 2 disulfides stabilise this stretch: cysteine 231/cysteine 316 and cysteine 241/cysteine 270. The region spanning 232–488 (NIPVVSGKEC…KMSMKIRPFF (257 aa)) is the Fibrinogen C-terminal domain. Asparagine 394 is a glycosylation site (N-linked (GlcNAc...) asparagine). Cysteine 424 and cysteine 437 are joined by a disulfide.

Heterohexamer; disulfide linked. Contains 2 sets of 3 non-identical chains (alpha, beta and gamma). The 2 heterotrimers are in head to head conformation with the N-termini in a small central domain. Conversion of fibrinogen to fibrin is triggered by thrombin, which cleaves fibrinopeptides A and B from alpha and beta chains, and thus exposes the N-terminal polymerization sites responsible for the formation of the soft clot. The soft clot is converted into the hard clot by factor XIIIA which catalyzes the epsilon-(gamma-glutamyl)lysine cross-linking between gamma chains (stronger) and between alpha chains (weaker) of different monomers. As to expression, detected in blood plasma (at protein level).

The protein resides in the secreted. In terms of biological role, cleaved by the protease thrombin to yield monomers which, together with fibrinogen alpha (FGA) and fibrinogen gamma (FGG), polymerize to form an insoluble fibrin matrix. Fibrin has a major function in hemostasis as one of the primary components of blood clots. In addition, functions during the early stages of wound repair to stabilize the lesion and guide cell migration during re-epithelialization. Was originally thought to be essential for platelet aggregation, based on in vitro studies using anticoagulated blood. However subsequent studies have shown that it is not absolutely required for thrombus formation in vivo. Enhances expression of SELP in activated platelets. Maternal fibrinogen is essential for successful pregnancy. Fibrin deposition is also associated with infection, where it protects against IFNG-mediated hemorrhage. May also facilitate the antibacterial immune response via both innate and T-cell mediated pathways. The polypeptide is Fibrinogen beta chain (FGB) (Homo sapiens (Human)).